A 497-amino-acid chain; its full sequence is Serine/threonine-protein kinase cst-1 (497 aa).

A disordered region spans residues 1 to 27; sequence MPPSTDSSRRNSEEGSSDGFKLDSSAL. Positions 35-286 constitute a Protein kinase domain; it reads FDIVGKLGEG…ALRLCEHTFI (252 aa). Residues 41 to 49 and K64 contribute to the ATP site; that span reads LGEGSYGSV. D154 serves as the catalytic Proton acceptor. Residues 367-416 are disordered; that stretch reads KSAYIPGSSKNGNSPRVQPPGHTASASDPSKNQPFAQDGTGPNFQLGTSE. Residues 390-416 show a composition bias toward polar residues; that stretch reads ASASDPSKNQPFAQDGTGPNFQLGTSE. Positions 446–493 constitute an SARAH domain; that stretch reads FEFLRNITLDELIRRKESLDSEMEEEIRELQRRYKTKRQPILDVIEIK. Residues 450 to 486 adopt a coiled-coil conformation; that stretch reads RNITLDELIRRKESLDSEMEEEIRELQRRYKTKRQPI.

Belongs to the protein kinase superfamily. STE Ser/Thr protein kinase family. STE20 subfamily. In terms of assembly, interacts with rsf-1 (via SARAH domain); the interaction is required for the phosphorylation of cst-1. The cofactor is Mg(2+). In terms of processing, proteolytically cleaved by caspase-3 during apoptosis which results in kinase activation. Post-translationally, phosphorylated. Widely expressed in epidermal cells.

The enzyme catalyses L-seryl-[protein] + ATP = O-phospho-L-seryl-[protein] + ADP + H(+). It carries out the reaction L-threonyl-[protein] + ATP = O-phospho-L-threonyl-[protein] + ADP + H(+). Functionally, serine/threonine-protein kinase which extends lifespan and delays tissue aging, probably by activating daf-16. This Caenorhabditis elegans protein is Serine/threonine-protein kinase cst-1.